The chain runs to 920 residues: Protein O-mannosyl-transferase TMTC3 (920 aa).

Residues 1-14 (MLEGKMADINFKEV) lie on the Cytoplasmic side of the membrane. A helical transmembrane segment spans residues 15–35 (TLIVSVVAACYWNSLFCGFVF). At 36–94 (DDVSAILDNKDLHPSTPLKTLFQNDFWGTPMSEERSHKSYRPLTVLTFRLNYLLSELKP) the chain is on the extracellular side. The chain crosses the membrane as a helical span at residues 95 to 115 (MSYHLLNTVFHAVVSVIFLKV). Topologically, residues 116-125 (CRLFLDKRSS) are cytoplasmic. 2 helical membrane passes run 126–144 (MIAALLFAVHPIHTEAVTG) and 145–163 (VVGRAELLSSVFFLAAFLS). Topologically, residues 164 to 171 (YTKSKGPD) are cytoplasmic. Residues 172 to 192 (NSIVWTPIVLTVFLVAVATLC) traverse the membrane as a helical segment. The Extracellular segment spans residues 193-198 (KEQGIT). The helical transmembrane segment at 199–219 (VVGICCVYEVFVAQGYTLPML) threads the bilayer. Over 220-236 (CTVAGQFLRGKGSIPLS) the chain is Cytoplasmic. A helical transmembrane segment spans residues 237–257 (MLQTLVKLIVLMLSTLLLVVV). The Extracellular portion of the chain corresponds to 258–325 (RVQVIQSQLP…LIESFLDVRN (68 aa)). A helical transmembrane segment spans residues 326–346 (LATFAFFCFLGALGIFSLRYP). The Cytoplasmic segment spans residues 347 to 358 (GDSSKTVLMALC). A helical membrane pass occupies residues 359 to 379 (LMALPFIPASNLFFPVGFVVA). Residues 380–381 (ER) lie on the Extracellular side of the membrane. The chain crosses the membrane as a helical span at residues 382–402 (VLYVPSMGFCILVAHGWQKIS). The Cytoplasmic segment spans residues 403–409 (NKSVLKK). A helical transmembrane segment spans residues 410–428 (LSWVCLSMVILTHALKTLH). The Extracellular portion of the chain corresponds to 429–920 (RNWDWESEYT…EEIERILNGE (492 aa)). TPR repeat units lie at residues 451–484 (AKLWNNVGHALENEKNFEKALKYFLQATHVQPDD), 485–518 (IGAHMNVGRTYKNLNRSREAEASYMLAKSLMPQI), 534–567 (NVYINLANLIRANESRLEEADQLYRQAISMRPDF), 568–601 (KQAYISRGELLLKMNKPLKAKEAYLKALELDRNN), 602–635 (ADLWYNLAIVYIELKEPNEALKNFNRALELNPKH), 673–706 (ANGYFNLGMLAMDDKKDSEAESWMKKAIKLQPDF), 707–740 (RSALFNLALLYSQTAKELKALPILEELLKYYPDH), 742–775 (KGLILKGDILMNQKKDIPGAKKCFEKILEMDPSN), and 776–809 (VQGKHNLCVVYFEEKELLKAERCLVETLALAPHE). N-linked (GlcNAc...) asparagine glycosylation is present at N499. Residue Y508 is modified to Phosphotyrosine. N-linked (GlcNAc...) asparagine glycosylation is present at N546. The segment at 829 to 897 (VEQPLAPADK…APHKTTKDIK (69 aa)) is disordered. The segment covering 840-858 (PGTEEREEIPSEDVKEISS) has biased composition (basic and acidic residues). Positions 867–880 (KTNNNRNSKSNKQS) are enriched in low complexity. Residues 887 to 897 (DAPHKTTKDIK) are compositionally biased toward basic and acidic residues.

It belongs to the TMTC family.

Its subcellular location is the membrane. It is found in the endoplasmic reticulum. The catalysed reaction is a di-trans,poly-cis-dolichyl beta-D-mannosyl phosphate + L-seryl-[protein] = 3-O-(alpha-D-mannosyl)-L-seryl-[protein] + a di-trans,poly-cis-dolichyl phosphate + H(+). The enzyme catalyses a di-trans,poly-cis-dolichyl beta-D-mannosyl phosphate + L-threonyl-[protein] = 3-O-(alpha-D-mannosyl)-L-threonyl-[protein] + a di-trans,poly-cis-dolichyl phosphate + H(+). It participates in protein modification; protein glycosylation. Transfers mannosyl residues to the hydroxyl group of serine or threonine residues. The 4 members of the TMTC family are O-mannosyl-transferases dedicated primarily to the cadherin superfamily, each member seems to have a distinct role in decorating the cadherin domains with O-linked mannose glycans at specific regions. Also acts as O-mannosyl-transferase on other proteins such as PDIA3. Involved in the positive regulation of proteasomal protein degradation in the endoplasmic reticulum (ER), and the control of ER stress response. This Mus musculus (Mouse) protein is Protein O-mannosyl-transferase TMTC3.